Reading from the N-terminus, the 201-residue chain is ATP-dependent Clp protease proteolytic subunit (201 aa).

Residue S101 is the Nucleophile of the active site. The active site involves H126.

Belongs to the peptidase S14 family. In terms of assembly, component of the chloroplastic Clp protease core complex.

It is found in the plastid. The protein resides in the chloroplast stroma. It catalyses the reaction Hydrolysis of proteins to small peptides in the presence of ATP and magnesium. alpha-casein is the usual test substrate. In the absence of ATP, only oligopeptides shorter than five residues are hydrolyzed (such as succinyl-Leu-Tyr-|-NHMec, and Leu-Tyr-Leu-|-Tyr-Trp, in which cleavage of the -Tyr-|-Leu- and -Tyr-|-Trp bonds also occurs).. Its function is as follows. Cleaves peptides in various proteins in a process that requires ATP hydrolysis. Has a chymotrypsin-like activity. Plays a major role in the degradation of misfolded proteins. The polypeptide is ATP-dependent Clp protease proteolytic subunit (Chaetosphaeridium globosum (Charophycean green alga)).